The following is a 151-amino-acid chain: 3-dehydroquinate dehydratase (151 aa).

The active-site Proton acceptor is Tyr26. Asn75, His81, and Asp88 together coordinate substrate. His101 functions as the Proton donor in the catalytic mechanism. Residues 102–103 and Arg112 each bind substrate; that span reads LS.

The protein belongs to the type-II 3-dehydroquinase family. Homododecamer.

It carries out the reaction 3-dehydroquinate = 3-dehydroshikimate + H2O. The protein operates within metabolic intermediate biosynthesis; chorismate biosynthesis; chorismate from D-erythrose 4-phosphate and phosphoenolpyruvate: step 3/7. Catalyzes a trans-dehydration via an enolate intermediate. The sequence is that of 3-dehydroquinate dehydratase from Shewanella denitrificans (strain OS217 / ATCC BAA-1090 / DSM 15013).